A 156-amino-acid chain; its full sequence is Ribosome maturation factor RimP (156 aa).

It belongs to the RimP family.

The protein localises to the cytoplasm. Required for maturation of 30S ribosomal subunits. In Bacillus thuringiensis (strain Al Hakam), this protein is Ribosome maturation factor RimP.